A 100-amino-acid chain; its full sequence is Large ribosomal subunit protein uL23 (100 aa).

It belongs to the universal ribosomal protein uL23 family. Part of the 50S ribosomal subunit. Contacts protein L29, and trigger factor when it is bound to the ribosome.

In terms of biological role, one of the early assembly proteins it binds 23S rRNA. One of the proteins that surrounds the polypeptide exit tunnel on the outside of the ribosome. Forms the main docking site for trigger factor binding to the ribosome. The polypeptide is Large ribosomal subunit protein uL23 (Shewanella denitrificans (strain OS217 / ATCC BAA-1090 / DSM 15013)).